The following is a 111-amino-acid chain: MGKLTLLLLILLGWLQYSLWLGKNGIHDYVRVKDDVVVQQGNNAKLKDRNEQLFAEIDDLNGGQEAIEERARNELGMIKPGESFYRLVPESNHRNANTAPSTNTPSNNIQR.

Residues 1 to 3 (MGK) lie on the Cytoplasmic side of the membrane. The chain crosses the membrane as a helical span at residues 4 to 21 (LTLLLLILLGWLQYSLWL). Residues 22–111 (GKNGIHDYVR…TNTPSNNIQR (90 aa)) lie on the Periplasmic side of the membrane. The stretch at 33–63 (KDDVVVQQGNNAKLKDRNEQLFAEIDDLNGG) forms a coiled coil. Residues 90–111 (ESNHRNANTAPSTNTPSNNIQR) are disordered. Positions 95 to 111 (NANTAPSTNTPSNNIQR) are enriched in low complexity.

It belongs to the FtsB family. In terms of assembly, part of a complex composed of FtsB, FtsL and FtsQ.

The protein resides in the cell inner membrane. Its function is as follows. Essential cell division protein. May link together the upstream cell division proteins, which are predominantly cytoplasmic, with the downstream cell division proteins, which are predominantly periplasmic. This chain is Cell division protein FtsB, found in Pectobacterium carotovorum subsp. carotovorum (strain PC1).